Here is a 356-residue protein sequence, read N- to C-terminus: DNA integrity scanning protein DisA (356 aa).

The DAC domain occupies 11–149; it reads VHTMRDTLQR…EGKSHILEEP (139 aa). ATP-binding positions include G78, L96, and 109–113; that span reads TRHRS.

The protein belongs to the DisA family. In terms of assembly, homooctamer. Mg(2+) serves as cofactor.

The enzyme catalyses 2 ATP = 3',3'-c-di-AMP + 2 diphosphate. Its function is as follows. Participates in a DNA-damage check-point. DisA forms globular foci that rapidly scan along the chromosomes searching for lesions. Also has diadenylate cyclase activity, catalyzing the condensation of 2 ATP molecules into cyclic di-AMP (c-di-AMP). c-di-AMP likely acts as a signaling molecule that may couple DNA integrity with a cellular process. The polypeptide is DNA integrity scanning protein DisA (Corynebacterium efficiens (strain DSM 44549 / YS-314 / AJ 12310 / JCM 11189 / NBRC 100395)).